A 244-amino-acid chain; its full sequence is Serine-rich single-pass membrane protein 1 (244 aa).

A helical transmembrane segment spans residues 35–55; sequence CGTIGSFLLWYFVIVFVLMFF. 3 disordered regions span residues 65-114, 126-191, and 210-244; these read DKKD…PVTN, QRRA…LGSY, and LAHH…FSKF. A compositionally biased stretch (basic and acidic residues) spans 80 to 94; it reads ASKETSCKRQSKDSA. 2 stretches are compositionally biased toward polar residues: residues 96–114 and 132–142; these read DPSQ…PVTN and QSQFNEVNQNQ. The segment covering 161-176 has biased composition (basic and acidic residues); the sequence is SWKESESEHHPSPDSI.

The protein resides in the membrane. The polypeptide is Serine-rich single-pass membrane protein 1 (SSMEM1) (Homo sapiens (Human)).